The chain runs to 299 residues: Bifunctional protein FolD (299 aa).

NADP(+) contacts are provided by residues 179 to 181 (GPG) and isoleucine 245.

This sequence belongs to the tetrahydrofolate dehydrogenase/cyclohydrolase family. Homodimer.

The catalysed reaction is (6R)-5,10-methylene-5,6,7,8-tetrahydrofolate + NADP(+) = (6R)-5,10-methenyltetrahydrofolate + NADPH. It carries out the reaction (6R)-5,10-methenyltetrahydrofolate + H2O = (6R)-10-formyltetrahydrofolate + H(+). It functions in the pathway one-carbon metabolism; tetrahydrofolate interconversion. Its function is as follows. Catalyzes the oxidation of 5,10-methylenetetrahydrofolate to 5,10-methenyltetrahydrofolate and then the hydrolysis of 5,10-methenyltetrahydrofolate to 10-formyltetrahydrofolate. This Deinococcus radiodurans (strain ATCC 13939 / DSM 20539 / JCM 16871 / CCUG 27074 / LMG 4051 / NBRC 15346 / NCIMB 9279 / VKM B-1422 / R1) protein is Bifunctional protein FolD.